Consider the following 480-residue polypeptide: Uronate isomerase (480 aa).

This sequence belongs to the metallo-dependent hydrolases superfamily. Uronate isomerase family.

The enzyme catalyses D-glucuronate = D-fructuronate. The catalysed reaction is aldehydo-D-galacturonate = keto-D-tagaturonate. Its pathway is carbohydrate metabolism; pentose and glucuronate interconversion. The chain is Uronate isomerase from Phenylobacterium zucineum (strain HLK1).